A 120-amino-acid polypeptide reads, in one-letter code: Putative pterin-4-alpha-carbinolamine dehydratase (120 aa).

Belongs to the pterin-4-alpha-carbinolamine dehydratase family.

It catalyses the reaction (4aS,6R)-4a-hydroxy-L-erythro-5,6,7,8-tetrahydrobiopterin = (6R)-L-erythro-6,7-dihydrobiopterin + H2O. In Saccharomyces cerevisiae (strain ATCC 204508 / S288c) (Baker's yeast), this protein is Putative pterin-4-alpha-carbinolamine dehydratase.